We begin with the raw amino-acid sequence, 216 residues long: Eukaryotic translation initiation factor isoform 4E-2 (216 aa).

The segment at 1 to 23 is disordered; that stretch reads MAEVEAPATAVEAPAAAVATTTP. The cysteines at positions 113 and 152 are disulfide-linked.

Belongs to the eukaryotic initiation factor 4E family. In terms of assembly, EIF4F is a multi-subunit complex, the composition of which varies with external and internal environmental conditions. It is composed of at least EIF4A, EIF4E and EIF4G. EIF4E is also known to interact with other partners. In higher plants two isoforms of EIF4F have been identified, named isoform EIF4F and isoform EIF(iso)4F. Isoform EIF4F has subunits p220 and p26, whereas isoform EIF(iso)4F has subunits p82 and p28. According to the redox status, the Cys-113-Cys-152 disulfide bridge may have a role in regulating protein function by affecting its ability to bind capped mRNA.

Recognizes and binds the 7-methylguanosine-containing mRNA cap during an early step in the initiation of protein synthesis and facilitates ribosome binding by inducing the unwinding of the mRNAs secondary structures. This chain is Eukaryotic translation initiation factor isoform 4E-2, found in Zea mays (Maize).